Consider the following 418-residue polypeptide: Glutamyl-tRNA reductase (418 aa).

Substrate contacts are provided by residues 49-52 (TCNR), Ser107, 112-114 (EPQ), and Gln118. The active-site Nucleophile is the Cys50. 187 to 192 (GAGETI) contributes to the NADP(+) binding site.

The protein belongs to the glutamyl-tRNA reductase family. Homodimer.

It catalyses the reaction (S)-4-amino-5-oxopentanoate + tRNA(Glu) + NADP(+) = L-glutamyl-tRNA(Glu) + NADPH + H(+). The protein operates within porphyrin-containing compound metabolism; protoporphyrin-IX biosynthesis; 5-aminolevulinate from L-glutamyl-tRNA(Glu): step 1/2. In terms of biological role, catalyzes the NADPH-dependent reduction of glutamyl-tRNA(Glu) to glutamate 1-semialdehyde (GSA). This Vibrio parahaemolyticus serotype O3:K6 (strain RIMD 2210633) protein is Glutamyl-tRNA reductase.